A 697-amino-acid chain; its full sequence is Polyribonucleotide nucleotidyltransferase (697 aa).

Mg(2+)-binding residues include D489 and D495. The 60-residue stretch at 556–615 (PRIETIKIKPDKIREVIGSGGKVIRGITEATGVKIEIQDDGTINIASADPEATKKAIAMI) folds into the KH domain. The S1 motif domain occupies 625-693 (GKTYKGRIVK…RSGRVKLSRK (69 aa)).

Belongs to the polyribonucleotide nucleotidyltransferase family. Requires Mg(2+) as cofactor.

The protein localises to the cytoplasm. The catalysed reaction is RNA(n+1) + phosphate = RNA(n) + a ribonucleoside 5'-diphosphate. Involved in mRNA degradation. Catalyzes the phosphorolysis of single-stranded polyribonucleotides processively in the 3'- to 5'-direction. The polypeptide is Polyribonucleotide nucleotidyltransferase (Bdellovibrio bacteriovorus (strain ATCC 15356 / DSM 50701 / NCIMB 9529 / HD100)).